Here is a 26-residue protein sequence, read N- to C-terminus: Dermaseptin-J2 (26 aa).

A Valine amide modification is found at valine 26.

Expressed by the skin glands.

The protein resides in the secreted. In terms of biological role, has antimicrobial activity. The chain is Dermaseptin-J2 from Phasmahyla jandaia (Jandaia leaf frog).